A 507-amino-acid chain; its full sequence is E3 ubiquitin-protein ligase makorin-3 (507 aa).

Low complexity predominate over residues M1–E21. 2 disordered regions span residues M1 to L48 and R69 to S89. The C3H1-type 1 zinc-finger motif lies at W95 to S122. The tract at residues M126 to I149 is disordered. Residues G238–I265 form a C3H1-type 2 zinc finger. Residues C266–H293 are makorin-type Cys-His. Residues C311–R365 form an RING-type zinc finger. A C3H1-type 3 zinc finger spans residues A394–P423.

Ubiquitous.

Its subcellular location is the nucleus. It carries out the reaction S-ubiquitinyl-[E2 ubiquitin-conjugating enzyme]-L-cysteine + [acceptor protein]-L-lysine = [E2 ubiquitin-conjugating enzyme]-L-cysteine + N(6)-ubiquitinyl-[acceptor protein]-L-lysine.. It participates in protein modification; protein ubiquitination. In terms of biological role, E3 ubiquitin ligase catalyzing the covalent attachment of ubiquitin moieties onto substrate proteins. Acts as a key developmental timer that helps ensure puberty begins at the appropriate age, by inhibiting premature activation of the reproductive hormone cascade. Epigenetically regulates GNRH1 transcription by disrupting the binding of methyl-DNA binding protein 3/MBD3 to the promoter of GNRH1. Mechanistically, mediates the non-proteolytic ubiquitination of MBD3 at multiple sites with 'Lys27' ubiquitin linkages and thereby regulates the methylation status of the genome, including GNRH1 promoter. Modulates the stability and translation of GNRH1 mRNA by mediating the non-proteolytic ubiquitination of PABP family members PABPC1, PABPC3 and PABPC4 at multiple sites. Also participates in the maintenance of genomic and epigenomic stability by regulating the abundance of APEX2 via 'Lys-48'-linked ubiquitination. The chain is E3 ubiquitin-protein ligase makorin-3 (MKRN3) from Homo sapiens (Human).